The sequence spans 197 residues: Shikimate kinase (197 aa).

26 to 31 lines the ATP pocket; it reads GSGKSR. Residue serine 30 coordinates Mg(2+). Residues aspartate 48, arginine 72, and glycine 94 each coordinate substrate. Arginine 132 is an ATP binding site. Residue arginine 150 participates in substrate binding.

The protein belongs to the shikimate kinase family. In terms of assembly, monomer. Mg(2+) is required as a cofactor.

It localises to the cytoplasm. The catalysed reaction is shikimate + ATP = 3-phosphoshikimate + ADP + H(+). It participates in metabolic intermediate biosynthesis; chorismate biosynthesis; chorismate from D-erythrose 4-phosphate and phosphoenolpyruvate: step 5/7. Functionally, catalyzes the specific phosphorylation of the 3-hydroxyl group of shikimic acid using ATP as a cosubstrate. The sequence is that of Shikimate kinase from Prochlorococcus marinus (strain MIT 9211).